The chain runs to 341 residues: Elongation factor Ts, mitochondrial 2 (341 aa).

The N-terminal 17 residues, Met-1–Tyr-17, are a transit peptide targeting the mitochondrion.

Belongs to the EF-Ts family.

The protein resides in the mitochondrion. Its function is as follows. Associates with the EF-Tu.GDP complex and induces the exchange of GDP to GTP. It remains bound to the aminoacyl-tRNA.EF-Tu.GTP complex up to the GTP hydrolysis stage on the ribosome. The chain is Elongation factor Ts, mitochondrial 2 from Postia placenta (strain ATCC 44394 / Madison 698-R) (Brown rot fungus).